The chain runs to 264 residues: Merozoite surface protein 2 (264 aa).

The first 20 residues, 1-20, serve as a signal peptide directing secretion; the sequence is MKVIKTLSIINFFIFVTFNI. 2 N-linked (GlcNAc...) asparagine glycosylation sites follow: Asn22 and Asn36. The polymorphic region stretch occupies residues 44–190; the sequence is ANEGSNTNSV…PQTAENENPA (147 aa). A disordered region spans residues 46-225; it reads EGSNTNSVGA…DSQKECTDGN (180 aa). A run of 2 repeats spans residues 60 to 91 and 92 to 123. A 2 X 32 AA perfects repeats region spans residues 60–123; it reads ADTIASGSQR…GESQTTTPTA (64 aa). The segment covering 70-81 has biased composition (low complexity); it reads STNSASTSTTNN. Residues 82 to 101 show a composition bias toward polar residues; the sequence is GESQTTTPTAADTIASGSQR. A compositionally biased stretch (low complexity) spans 102-145; that stretch reads STNSASTSTTNNGESQTTTPTAADTPTTTESNSPSPPITTTESS. Asn152 carries N-linked (GlcNAc...) asparagine glycosylation. Residues 154–166 are compositionally biased toward basic and acidic residues; the sequence is TDGKGEESEKQNE. N-linked (GlcNAc...) asparagine glycosylation is found at Asn168 and Asn213. The cysteines at positions 221 and 229 are disulfide-linked. N-linked (GlcNAc...) asparagine glycans are attached at residues Asn237 and Asn238. Asn238 carries the GPI-anchor amidated asparagine lipid modification. The propeptide at 239–264 is removed in mature form; that stretch reads SSNIASINKFVVLISATLVLSFAIFI.

It is found in the cell membrane. May play a role in the merozoite attachment to the erythrocyte. The polypeptide is Merozoite surface protein 2 (Plasmodium falciparum (isolate fid3 / India)).